The sequence spans 311 residues: Cytochrome f (311 aa).

The N-terminal stretch at 1-27 (MKHFFKSLTLAIALAASVLFWSPQAQA) is a signal peptide. Tyr-28, Cys-48, Cys-51, and His-52 together coordinate heme. The chain crosses the membrane as a helical span at residues 279 to 296 (WLLVFFAAITLSQILLVL).

The protein belongs to the cytochrome f family. The 4 large subunits of the cytochrome b6-f complex are cytochrome b6, subunit IV (17 kDa polypeptide, PetD), cytochrome f and the Rieske protein, while the 4 small subunits are PetG, PetL, PetM and PetN. The complex functions as a dimer. Heme serves as cofactor.

It is found in the cellular thylakoid membrane. In terms of biological role, component of the cytochrome b6-f complex, which mediates electron transfer between photosystem II (PSII) and photosystem I (PSI), cyclic electron flow around PSI, and state transitions. The protein is Cytochrome f of Synechococcus elongatus.